A 211-amino-acid polypeptide reads, in one-letter code: ATP phosphoribosyltransferase (211 aa).

Belongs to the ATP phosphoribosyltransferase family. Short subfamily. In terms of assembly, heteromultimer composed of HisG and HisZ subunits.

The protein resides in the cytoplasm. The catalysed reaction is 1-(5-phospho-beta-D-ribosyl)-ATP + diphosphate = 5-phospho-alpha-D-ribose 1-diphosphate + ATP. Its pathway is amino-acid biosynthesis; L-histidine biosynthesis; L-histidine from 5-phospho-alpha-D-ribose 1-diphosphate: step 1/9. Its function is as follows. Catalyzes the condensation of ATP and 5-phosphoribose 1-diphosphate to form N'-(5'-phosphoribosyl)-ATP (PR-ATP). Has a crucial role in the pathway because the rate of histidine biosynthesis seems to be controlled primarily by regulation of HisG enzymatic activity. The protein is ATP phosphoribosyltransferase (hisG) of Pseudomonas aeruginosa (strain ATCC 15692 / DSM 22644 / CIP 104116 / JCM 14847 / LMG 12228 / 1C / PRS 101 / PAO1).